Consider the following 56-residue polypeptide: Probable head completion protein 2 (56 aa).

The protein belongs to the skunalikevirus head completion protein 2 family.

The protein resides in the virion. Functionally, probably functions as a stopper that is part of the head-tail connector and that locks the viral DNA in the capsid. During assembly, functions as a docking platform which the preassembled tail can bind to. Plays a role in morphogenesis of the virion capsid after genome packaging. In Lactococcus lactis (Lactococcus lactis bacteriophage SK1), this protein is Probable head completion protein 2.